Here is a 164-residue protein sequence, read N- to C-terminus: MTGILAEPETWVAVAFVILMGVFAYFGVHRTVLKSLDNRRDRIKAELDEAARLKEEAAALLAEYKARRASAEREAQEIIAGAKDEAERIAAEAKAKLEDFVARRTKTAEGKIALAEAQAVADVRSAAANAAVAAASTILSQSVKGQVAEGLLQRGIEEVRSKLN.

A helical transmembrane segment spans residues 8–28 (PETWVAVAFVILMGVFAYFGV).

This sequence belongs to the ATPase B chain family. In terms of assembly, F-type ATPases have 2 components, F(1) - the catalytic core - and F(0) - the membrane proton channel. F(1) has five subunits: alpha(3), beta(3), gamma(1), delta(1), epsilon(1). F(0) has three main subunits: a(1), b(2) and c(10-14). The alpha and beta chains form an alternating ring which encloses part of the gamma chain. F(1) is attached to F(0) by a central stalk formed by the gamma and epsilon chains, while a peripheral stalk is formed by the delta and b chains.

The protein resides in the cell inner membrane. F(1)F(0) ATP synthase produces ATP from ADP in the presence of a proton or sodium gradient. F-type ATPases consist of two structural domains, F(1) containing the extramembraneous catalytic core and F(0) containing the membrane proton channel, linked together by a central stalk and a peripheral stalk. During catalysis, ATP synthesis in the catalytic domain of F(1) is coupled via a rotary mechanism of the central stalk subunits to proton translocation. Its function is as follows. Component of the F(0) channel, it forms part of the peripheral stalk, linking F(1) to F(0). The chain is ATP synthase subunit b 1 from Rhodopseudomonas palustris (strain BisB18).